The primary structure comprises 486 residues: Malonate-semialdehyde dehydrogenase (486 aa).

NAD(+) is bound by residues phenylalanine 154, lysine 178, glutamate 181, arginine 182, and serine 231. Cysteine 286 (nucleophile) is an active-site residue. Glutamate 386 contributes to the NAD(+) binding site.

The protein belongs to the aldehyde dehydrogenase family. IolA subfamily. Homotetramer.

The enzyme catalyses 3-oxopropanoate + NAD(+) + CoA + H2O = hydrogencarbonate + acetyl-CoA + NADH + H(+). It catalyses the reaction 2-methyl-3-oxopropanoate + NAD(+) + CoA + H2O = propanoyl-CoA + hydrogencarbonate + NADH + H(+). The protein operates within polyol metabolism; myo-inositol degradation into acetyl-CoA; acetyl-CoA from myo-inositol: step 7/7. Catalyzes the oxidation of malonate semialdehyde (MSA) and methylmalonate semialdehyde (MMSA) into acetyl-CoA and propanoyl-CoA, respectively. Is involved in a myo-inositol catabolic pathway. Bicarbonate, and not CO2, is the end-product of the enzymatic reaction. This Bacillus pumilus (strain SAFR-032) protein is Malonate-semialdehyde dehydrogenase.